Reading from the N-terminus, the 443-residue chain is tRNA modification GTPase MnmE (443 aa).

Residues R23, E82, and K121 each contribute to the (6S)-5-formyl-5,6,7,8-tetrahydrofolate site. Positions G215 to Q364 constitute a TrmE-type G domain. N225 lines the K(+) pocket. GTP is bound by residues N225–S230, T244–T250, and D269–G272. S229 serves as a coordination point for Mg(2+). T244, I246, and T249 together coordinate K(+). Residue T250 participates in Mg(2+) binding. Residue K443 coordinates (6S)-5-formyl-5,6,7,8-tetrahydrofolate.

Belongs to the TRAFAC class TrmE-Era-EngA-EngB-Septin-like GTPase superfamily. TrmE GTPase family. As to quaternary structure, homodimer. Heterotetramer of two MnmE and two MnmG subunits. K(+) is required as a cofactor.

It is found in the cytoplasm. In terms of biological role, exhibits a very high intrinsic GTPase hydrolysis rate. Involved in the addition of a carboxymethylaminomethyl (cmnm) group at the wobble position (U34) of certain tRNAs, forming tRNA-cmnm(5)s(2)U34. The sequence is that of tRNA modification GTPase MnmE from Chlamydia caviae (strain ATCC VR-813 / DSM 19441 / 03DC25 / GPIC) (Chlamydophila caviae).